The following is a 387-amino-acid chain: 3-ketoacyl-CoA thiolase FadA (387 aa).

C91 serves as the catalytic Acyl-thioester intermediate. Residues H343 and C373 each act as proton acceptor in the active site.

This sequence belongs to the thiolase-like superfamily. Thiolase family. Heterotetramer of two alpha chains (FadB) and two beta chains (FadA).

It localises to the cytoplasm. The catalysed reaction is an acyl-CoA + acetyl-CoA = a 3-oxoacyl-CoA + CoA. It functions in the pathway lipid metabolism; fatty acid beta-oxidation. Catalyzes the final step of fatty acid oxidation in which acetyl-CoA is released and the CoA ester of a fatty acid two carbons shorter is formed. Involved in the aerobic and anaerobic degradation of long-chain fatty acids. This Escherichia coli (strain K12) protein is 3-ketoacyl-CoA thiolase FadA (fadA).